The chain runs to 320 residues: Ferrochelatase (320 aa).

Residues His-194 and Glu-275 each coordinate Fe cation.

It belongs to the ferrochelatase family. As to quaternary structure, monomer.

It localises to the cytoplasm. It carries out the reaction heme b + 2 H(+) = protoporphyrin IX + Fe(2+). The protein operates within porphyrin-containing compound metabolism; protoheme biosynthesis; protoheme from protoporphyrin-IX: step 1/1. Functionally, catalyzes the ferrous insertion into protoporphyrin IX. The protein is Ferrochelatase of Salmonella arizonae (strain ATCC BAA-731 / CDC346-86 / RSK2980).